The primary structure comprises 306 residues: Ribosomal RNA small subunit methyltransferase H (306 aa).

S-adenosyl-L-methionine-binding positions include glycine 33 to tyrosine 35, aspartate 51, phenylalanine 82, aspartate 96, and glutamine 103.

The protein belongs to the methyltransferase superfamily. RsmH family.

It localises to the cytoplasm. It catalyses the reaction cytidine(1402) in 16S rRNA + S-adenosyl-L-methionine = N(4)-methylcytidine(1402) in 16S rRNA + S-adenosyl-L-homocysteine + H(+). Specifically methylates the N4 position of cytidine in position 1402 (C1402) of 16S rRNA. This Rickettsia akari (strain Hartford) protein is Ribosomal RNA small subunit methyltransferase H.